Consider the following 299-residue polypeptide: tRNA-cytidine(32) 2-sulfurtransferase (299 aa).

The PP-loop motif motif lies at 49–54; it reads SGGKDS. The [4Fe-4S] cluster site is built by C124, C127, and C215.

It belongs to the TtcA family. Homodimer. The cofactor is Mg(2+). [4Fe-4S] cluster serves as cofactor.

Its subcellular location is the cytoplasm. The catalysed reaction is cytidine(32) in tRNA + S-sulfanyl-L-cysteinyl-[cysteine desulfurase] + AH2 + ATP = 2-thiocytidine(32) in tRNA + L-cysteinyl-[cysteine desulfurase] + A + AMP + diphosphate + H(+). It functions in the pathway tRNA modification. In terms of biological role, catalyzes the ATP-dependent 2-thiolation of cytidine in position 32 of tRNA, to form 2-thiocytidine (s(2)C32). The sulfur atoms are provided by the cysteine/cysteine desulfurase (IscS) system. This Deinococcus radiodurans (strain ATCC 13939 / DSM 20539 / JCM 16871 / CCUG 27074 / LMG 4051 / NBRC 15346 / NCIMB 9279 / VKM B-1422 / R1) protein is tRNA-cytidine(32) 2-sulfurtransferase.